A 133-amino-acid polypeptide reads, in one-letter code: Fatty acid-binding protein, heart (133 aa).

Position 2 is an N-acetylalanine (A2). T8 carries the phosphothreonine modification. The residue at position 20 (Y20) is a Phosphotyrosine; by Tyr-kinases. The residue at position 23 (S23) is a Phosphoserine. Position 30 is a phosphothreonine (T30). Position 83 is a phosphoserine (S83). 127–129 is a (9Z)-octadecenoate binding site; that stretch reads RTY. 127 to 129 lines the hexadecanoate pocket; sequence RTY. Residue 127-129 coordinates octadecanoate; sequence RTY.

This sequence belongs to the calycin superfamily. Fatty-acid binding protein (FABP) family.

The protein localises to the cytoplasm. FABPs are thought to play a role in the intracellular transport of long-chain fatty acids and their acyl-CoA esters. In Mus musculus (Mouse), this protein is Fatty acid-binding protein, heart (Fabp3).